The following is a 372-amino-acid chain: L-selectin (372 aa).

The first 28 residues, 1–28, serve as a signal peptide directing secretion; that stretch reads MVFPWRCEGTYWGSRNILKLWVWTLLCC. A propeptide spanning residues 29-38 is cleaved from the precursor; sequence DFLIHHGTHC. The Extracellular segment spans residues 39 to 332; it reads WTYHYSEKPM…FSKIKEGDYN (294 aa). The C-type lectin domain maps to 55–155; sequence KFCKQNYTDL…ACHKRKAALC (101 aa). Cystine bridges form between Cys-57–Cys-155, Cys-128–Cys-147, Cys-128–Cys-160, Cys-160–Cys-171, Cys-165–Cys-180, Cys-182–Cys-191, Cys-197–Cys-241, Cys-227–Cys-254, Cys-259–Cys-303, and Cys-289–Cys-316. Asn-60 and Asn-104 each carry an N-linked (GlcNAc...) asparagine glycan. Ca(2+) is bound by residues Glu-118, Asn-120, Glu-126, Asn-143, and Asp-144. Positions 156 to 192 constitute an EGF-like domain; the sequence is YTASCQPGSCNGRGECVETINNHTCICDAGYYGPQCQ. Asn-177 carries an N-linked (GlcNAc...) asparagine glycan. Sushi domains are found at residues 195 to 256 and 257 to 318; these read VQCE…ICQV and VQCE…ICQE. N-linked (GlcNAc...) asparagine glycosylation is found at Asn-216, Asn-226, Asn-246, Asn-278, Asn-288, Asn-308, and Asn-320. A helical membrane pass occupies residues 333–355; sequence PLFIPVAVMVTAFSGLAFLIWLA. Topologically, residues 356 to 372 are cytoplasmic; sequence RRLKKGKKSQERMDDPY.

The protein belongs to the selectin/LECAM family. In terms of assembly, interaction with SELPLG/PSGL1 and PODXL2 is required for promoting recruitment and rolling of leukocytes. This interaction is dependent on the sialyl Lewis X glycan modification of SELPLG and PODXL2, and tyrosine sulfation modifications of SELPLG. Sulfation on 'Tyr-51' of SELPLG is important for L-selectin binding. In terms of processing, N-glycosylated. In terms of tissue distribution, predominantly expressed in lymphoid tissue.

It is found in the cell membrane. In terms of biological role, calcium-dependent lectin that mediates cell adhesion by binding to glycoproteins on neighboring cells. Mediates the adherence of lymphocytes to endothelial cells of high endothelial venules in peripheral lymph nodes. Promotes initial tethering and rolling of leukocytes in endothelia. In Mus musculus (Mouse), this protein is L-selectin (Sell).